A 251-amino-acid polypeptide reads, in one-letter code: Small ribosomal subunit protein uS3 (251 aa).

Residues 39 to 112 enclose the KH type-2 domain; the sequence is IRKYINEVYA…NIILNVVEVR (74 aa). A disordered region spans residues 222–251; the sequence is EEKKPAKKFNKKPVAAKPANKEEKSSKEVK. Over residues 240–251 the composition is skewed to basic and acidic residues; that stretch reads ANKEEKSSKEVK.

Belongs to the universal ribosomal protein uS3 family. Part of the 30S ribosomal subunit. Forms a tight complex with proteins S10 and S14.

In terms of biological role, binds the lower part of the 30S subunit head. Binds mRNA in the 70S ribosome, positioning it for translation. The polypeptide is Small ribosomal subunit protein uS3 (Anaeroplasma abactoclasticum).